Reading from the N-terminus, the 487-residue chain is Betaine aldehyde dehydrogenase (487 aa).

Residues S26 and D93 each coordinate K(+). 150-152 (GAW) contributes to the NAD(+) binding site. K162 serves as the catalytic Charge relay system. NAD(+) is bound by residues 176 to 179 (KPSE) and 229 to 232 (SVPT). L244 contributes to the K(+) binding site. The active-site Proton acceptor is E250. Residues G252, C284, and E384 each contribute to the NAD(+) site. C284 functions as the Nucleophile in the catalytic mechanism. C284 carries the post-translational modification Cysteine sulfenic acid (-SOH). Positions 454 and 457 each coordinate K(+). E461 serves as the catalytic Charge relay system.

It belongs to the aldehyde dehydrogenase family. In terms of assembly, dimer of dimers. Requires K(+) as cofactor.

The enzyme catalyses betaine aldehyde + NAD(+) + H2O = glycine betaine + NADH + 2 H(+). Its pathway is amine and polyamine biosynthesis; betaine biosynthesis via choline pathway; betaine from betaine aldehyde: step 1/1. Its function is as follows. Involved in the biosynthesis of the osmoprotectant glycine betaine. Catalyzes the irreversible oxidation of betaine aldehyde to the corresponding acid. In Rhizobium leguminosarum bv. trifolii (strain WSM2304), this protein is Betaine aldehyde dehydrogenase.